Here is an 86-residue protein sequence, read N- to C-terminus: Cytochrome c oxidase subunit 6B1 (86 aa).

At alanine 2 the chain carries N-acetylalanine. In terms of domain architecture, CHCH spans 27–73; it reads TRNCWQNYLDFHRCEKAMTAKGGDVSVCEWYRRVYKSLCPISWVSTW. A Cx9C motif motif is present at residues 30–40; that stretch reads CWQNYLDFHRC. Cystine bridges form between cysteine 30–cysteine 65 and cysteine 40–cysteine 54. The Cx10C motif motif lies at 54-65; sequence CEWYRRVYKSLC. The residue at position 62 (lysine 62) is an N6-acetyllysine.

Belongs to the cytochrome c oxidase subunit 6B family. In terms of assembly, component of the cytochrome c oxidase (complex IV, CIV), a multisubunit enzyme composed of 14 subunits. The complex is composed of a catalytic core of 3 subunits MT-CO1, MT-CO2 and MT-CO3, encoded in the mitochondrial DNA, and 11 supernumerary subunits COX4I, COX5A, COX5B, COX6A, COX6B, COX6C, COX7A, COX7B, COX7C, COX8 and NDUFA4, which are encoded in the nuclear genome. The complex exists as a monomer or a dimer and forms supercomplexes (SCs) in the inner mitochondrial membrane with NADH-ubiquinone oxidoreductase (complex I, CI) and ubiquinol-cytochrome c oxidoreductase (cytochrome b-c1 complex, complex III, CIII), resulting in different assemblies (supercomplex SCI(1)III(2)IV(1) and megacomplex MCI(2)III(2)IV(2)).

Its subcellular location is the mitochondrion inner membrane. It functions in the pathway energy metabolism; oxidative phosphorylation. Component of the cytochrome c oxidase, the last enzyme in the mitochondrial electron transport chain which drives oxidative phosphorylation. The respiratory chain contains 3 multisubunit complexes succinate dehydrogenase (complex II, CII), ubiquinol-cytochrome c oxidoreductase (cytochrome b-c1 complex, complex III, CIII) and cytochrome c oxidase (complex IV, CIV), that cooperate to transfer electrons derived from NADH and succinate to molecular oxygen, creating an electrochemical gradient over the inner membrane that drives transmembrane transport and the ATP synthase. Cytochrome c oxidase is the component of the respiratory chain that catalyzes the reduction of oxygen to water. Electrons originating from reduced cytochrome c in the intermembrane space (IMS) are transferred via the dinuclear copper A center (CU(A)) of subunit 2 and heme A of subunit 1 to the active site in subunit 1, a binuclear center (BNC) formed by heme A3 and copper B (CU(B)). The BNC reduces molecular oxygen to 2 water molecules using 4 electrons from cytochrome c in the IMS and 4 protons from the mitochondrial matrix. This chain is Cytochrome c oxidase subunit 6B1 (COX6B1), found in Carlito syrichta (Philippine tarsier).